The chain runs to 156 residues: Peptidyl-prolyl cis-trans isomerase cypE (156 aa).

Residues 2–155 form the PPIase cyclophilin-type domain; it reads TEQTVTLQTT…DEIRIIKATA (154 aa).

The protein belongs to the cyclophilin-type PPIase family. As to quaternary structure, interacts with snwA.

Its subcellular location is the cytoplasm. It localises to the nucleus. It catalyses the reaction [protein]-peptidylproline (omega=180) = [protein]-peptidylproline (omega=0). In terms of biological role, catalyzes the cis-trans isomerization of proline imidic peptide bonds in oligopeptides. Plays a role in protein folding, transport and assembly. The protein is Peptidyl-prolyl cis-trans isomerase cypE (cypE) of Dictyostelium discoideum (Social amoeba).